A 536-amino-acid polypeptide reads, in one-letter code: Lipid scramblase CLPTM1L (536 aa).

Residues 1 to 9 are Cytoplasmic-facing; that stretch reads MLSRSSFTS. Residues 10 to 30 traverse the membrane as a helical segment; it reads LAVGVFAVYVAHTCWVMYGIV. Over 31-284 the chain is Extracellular; it reads YTRPCPSGGA…VKGIFVDTNL (254 aa). Asparagine 92, asparagine 102, and asparagine 229 each carry an N-linked (GlcNAc...) asparagine glycan. Residues 285–305 traverse the membrane as a helical segment; that stretch reads YFLALTFFVAAFHLLFDFLAF. Topologically, residues 306 to 324 are cytoplasmic; that stretch reads KNDISFWKKKRSMIGMSTK. Residues 325-342 form a helical membrane-spanning segment; that stretch reads AVLWRCFSTVVIFLFLLD. Residues 343-346 are Extracellular-facing; it reads EQTS. Residues 347-364 form a helical membrane-spanning segment; the sequence is LLVLIPAGIGAVIELWKV. The Cytoplasmic portion of the chain corresponds to 365–402; sequence KKALKMTVKWQGIRPKVQFGASNDSEKKTEEYDTQAMK. A helical transmembrane segment spans residues 403-423; sequence YLSYLLYPLCIGGAAYSLLNV. Over 424–428 the chain is Extracellular; the sequence is KYKSW. A helical membrane pass occupies residues 429 to 449; the sequence is YSWLINSFVNGVYAFGFLFML. The Cytoplasmic portion of the chain corresponds to 450–536; sequence PQLFVNYKMK…YEEKPKKKSS (87 aa).

It belongs to the CLPTM1 family.

Its subcellular location is the endoplasmic reticulum membrane. The enzyme catalyses a 6-(alpha-D-glucosaminyl)-1-(1,2-diacyl-sn-glycero-3-phospho)-1D-myo-inositol(in) = a 6-(alpha-D-glucosaminyl)-1-(1,2-diacyl-sn-glycero-3-phospho)-1D-myo-inositol(out). It catalyses the reaction 6-(alpha-D-glucosaminyl)-(1-octadecanoyl,2-(9Z)-octadecenoyl-sn-glycero-3-phospho)-1D-myo-inositol(in) = 6-(alpha-D-glucosaminyl)-(1-octadecanoyl,2-(9Z)-octadecenoyl-sn-glycero-3-phospho)-1D-myo-inositol(out). It carries out the reaction a 1,2-diacyl-sn-glycero-3-phospho-(1D-myo-inositol)(in) = a 1,2-diacyl-sn-glycero-3-phospho-(1D-myo-inositol)(out). The catalysed reaction is a 1,2-diacyl-sn-glycero-3-phosphocholine(in) = a 1,2-diacyl-sn-glycero-3-phosphocholine(out). The enzyme catalyses a 1,2-diacyl-sn-glycero-3-phosphoethanolamine(in) = a 1,2-diacyl-sn-glycero-3-phosphoethanolamine(out). Functionally, scramblase that mediates the translocation of glucosaminylphosphatidylinositol (alpha-D-GlcN-(1-6)-(1,2-diacyl-sn-glycero-3-phospho)-1D-myo-inositol, GlcN-PI) across the endoplasmic reticulum (ER) membrane, from the cytosolic leaflet to the luminal leaflet of the ER membrane, where it participates in the biosynthesis of glycosylphosphatidylinositol (GPI). GPI is a lipid glycoconjugate involved in post-translational modification of proteins. Can also translocate 1,2-diacyl-sn-glycero-3-phospho-(1D-myo-inositol) (phosphatidylinositol or PI), as well as several other phospholipids (1,2-diacyl-sn-glycero-3-phosphocholine, 1,2-diacyl-sn-glycero-3-phosphoethanolamine), and N-acetylglucosaminylphosphatidylinositol (GlcNAc-PI) in vitro. In Gallus gallus (Chicken), this protein is Lipid scramblase CLPTM1L (CLPTM1L).